A 580-amino-acid polypeptide reads, in one-letter code: Serine/threonine-protein kinase PINK1, mitochondrial (580 aa).

Residues Met1–Leu77 constitute a mitochondrion transit peptide. At Ala78–Ala93 the chain is on the mitochondrial intermembrane side. The chain crosses the membrane as a helical span at residues Gly94–Leu110. The required for outer membrane localization stretch occupies residues Ile111–Glu117. Residues Ile111 to Pro580 are Cytoplasmic-facing. One can recognise a Protein kinase domain in the interval Tyr156–Leu510. ATP-binding positions include Ile162 to Val170 and Lys186. Ser227 is modified (phosphoserine; by autocatalysis). Catalysis depends on Asp361, which acts as the Proton acceptor. The residue at position 401 (Ser401) is a Phosphoserine; by autocatalysis.

This sequence belongs to the protein kinase superfamily. Ser/Thr protein kinase family. As to quaternary structure, upon mitochondrial depolarization, it forms a supercomplex with TOM and TIM23 complexes. PINK1-TOM-TIM23 supercomplex formation requires PINK1 interaction with TOMM20 and TOMM70 and is critical for PINK1 stabilization at the outer mitochondrial membrane, kinase activation and downstream mitophagy. Upon mitochondrial depolarization, interacts with TIMM23; the interaction is required for PINK1 accumulation at the outer mitochondrial membrane, kinase activation by autophosphorylation and PRKN recruitement to mitochondria. Interacts with PRKN. Interacts with FBXO7. Forms a complex with PRKN and PARK7. Interacts with NENF. Mg(2+) is required as a cofactor. Proteolytically cleaved. In healthy cells, the precursor is continuously imported into the inner mitochondrial membrane (IMM), where it is proteolytically cleaved by mitochondrial-processing peptidase (MPP) and then undergoes further proteolytic cleavage by PARL or AFG3L2 to give rise to the 52 kDa short form. The 52 kDa short form is then released into the cytosol where it rapidly undergoes proteasome-dependent degradation. In unhealthy cells, when cellular stress conditions lead to the loss of mitochondrial membrane potential, mitochondrial import is impaired leading to the precursor accumulating on the outer mitochondrial membrane (OMM). If accumulation at the OMM fails and it is imported into the depolarized mitochondria, it undergoes cleavage by the IMM protease OMA1, promoting its subsequent degradation by the proteasome. In terms of processing, autophosphorylated. Loss of mitochondrial membrane potential results in the precursor accumulating on the outer mitochondrial membrane (OMM) where it is activated by autophosphorylation. Autophosphorylation at Ser-227 and Ser-401 is essential for selective recruitment of PRKN to depolarized mitochondria, via PINK1-dependent phosphorylation of ubiquitin and PRKN. High levels expressed in testis, lower levels in brain, heart, lung, liver and kidney.

The protein localises to the mitochondrion outer membrane. The protein resides in the mitochondrion inner membrane. It is found in the cytoplasm. It localises to the cytosol. The enzyme catalyses L-seryl-[protein] + ATP = O-phospho-L-seryl-[protein] + ADP + H(+). It carries out the reaction L-threonyl-[protein] + ATP = O-phospho-L-threonyl-[protein] + ADP + H(+). In terms of biological role, serine/threonine-protein kinase which acts as a sensor of mitochondrial damage and protects against mitochondrial dysfunction during cellular stress. It phosphorylates mitochondrial proteins to coordinate mitochondrial quality control mechanisms that remove and replace dysfunctional mitochondrial components. Depending on the severity of mitochondrial damage, activity ranges from preventing apoptosis and stimulating mitochondrial biogenesis to eliminating severely damaged mitochondria via PINK1-PRKN-dependent mitophagy. When cellular stress results in irreversible mitochondrial damage, PINK1 accumulates at the outer mitochondrial membrane (OMM) where it phosphorylates pre-existing polyubiquitin chains at 'Ser-65', recruits PRKN from the cytosol to the OMM and activates PRKN by phosphorylation at 'Ser-65'. Activated PRKN then ubiquinates VDAC1 and other OMM proteins to initiate mitophagy. The PINK1-PRKN pathway also promotes fission of damaged mitochondria by phosphorylating and thus promoting the PRKN-dependent degradation of mitochondrial proteins involved in fission such as MFN2. This prevents the refusion of unhealthy mitochondria with the mitochondrial network or initiates mitochondrial fragmentation facilitating their later engulfment by autophagosomes. Also promotes mitochondrial fission independently of PRKN and ATG7-mediated mitophagy, via the phosphorylation and activation of DNM1L. Regulates motility of damaged mitochondria by promoting the ubiquitination and subsequent degradation of MIRO1 and MIRO2; in motor neurons, this likely inhibits mitochondrial intracellular anterograde transport along the axons which probably increases the chance of the mitochondria undergoing mitophagy in the soma. Required for ubiquinone reduction by mitochondrial complex I by mediating phosphorylation of complex I subunit NDUFA10. Phosphorylates LETM1, positively regulating its mitochondrial calcium transport activity. This Mus musculus (Mouse) protein is Serine/threonine-protein kinase PINK1, mitochondrial (Pink1).